The following is a 67-amino-acid chain: Protein AaeX (67 aa).

2 helical membrane passes run 3-23 (LFPV…ELLL) and 47-67 (PALF…RLFV).

This sequence belongs to the AaeX family.

It localises to the cell membrane. This chain is Protein AaeX, found in Escherichia coli O157:H7.